The following is a 274-amino-acid chain: Dermonecrotic toxin LcsSicTox-betaIC1 (274 aa).

The active site involves His5. Glu25 and Asp27 together coordinate Mg(2+). The active-site Nucleophile is the His41. Disulfide bonds link Cys45–Cys51 and Cys47–Cys190. Asn66 carries N-linked (GlcNAc...) asparagine glycosylation. A Mg(2+)-binding site is contributed by Asp85.

It belongs to the arthropod phospholipase D family. Class II subfamily. It depends on Mg(2+) as a cofactor. As to expression, expressed by the venom gland.

The protein localises to the secreted. It carries out the reaction an N-(acyl)-sphingosylphosphocholine = an N-(acyl)-sphingosyl-1,3-cyclic phosphate + choline. The enzyme catalyses an N-(acyl)-sphingosylphosphoethanolamine = an N-(acyl)-sphingosyl-1,3-cyclic phosphate + ethanolamine. The catalysed reaction is a 1-acyl-sn-glycero-3-phosphocholine = a 1-acyl-sn-glycero-2,3-cyclic phosphate + choline. It catalyses the reaction a 1-acyl-sn-glycero-3-phosphoethanolamine = a 1-acyl-sn-glycero-2,3-cyclic phosphate + ethanolamine. Dermonecrotic toxins cleave the phosphodiester linkage between the phosphate and headgroup of certain phospholipids (sphingolipid and lysolipid substrates), forming an alcohol (often choline) and a cyclic phosphate. This toxin acts on sphingomyelin (SM). It may also act on ceramide phosphoethanolamine (CPE), lysophosphatidylcholine (LPC) and lysophosphatidylethanolamine (LPE), but not on lysophosphatidylserine (LPS), and lysophosphatidylglycerol (LPG). It acts by transphosphatidylation, releasing exclusively cyclic phosphate products as second products. Induces dermonecrosis, hemolysis, increased vascular permeability, edema, inflammatory response, and platelet aggregation. The sequence is that of Dermonecrotic toxin LcsSicTox-betaIC1 from Loxosceles cf. spinulosa (strain GJB-2008) (Recluse spider).